Here is a 279-residue protein sequence, read N- to C-terminus: Probable cyclic nucleotide phosphodiesterase Psyc_2036 (279 aa).

Fe cation-binding residues include aspartate 23, histidine 25, aspartate 70, asparagine 100, histidine 179, histidine 218, and histidine 220. Residues histidine 25, aspartate 70, and 100 to 101 each bind AMP; that span reads NH. Histidine 220 provides a ligand contact to AMP.

Belongs to the cyclic nucleotide phosphodiesterase class-III family. The cofactor is Fe(2+).

The polypeptide is Probable cyclic nucleotide phosphodiesterase Psyc_2036 (Psychrobacter arcticus (strain DSM 17307 / VKM B-2377 / 273-4)).